The following is a 342-amino-acid chain: Cytosolic Fe-S cluster assembly factor NBP35 (342 aa).

The disordered stretch occupies residues 1-45; it reads MGPSLETPEPVEDVLANPLKQKPQLVAPEPEHCPGPESEQAGTAD. [4Fe-4S] cluster-binding residues include cysteine 33, cysteine 47, cysteine 50, and cysteine 56. 86-93 contacts ATP; sequence GKGGVGKS. [4Fe-4S] cluster contacts are provided by cysteine 259 and cysteine 262.

This sequence belongs to the Mrp/NBP35 ATP-binding proteins family. NUBP1/NBP35 subfamily. Heterotetramer of 2 NBP35 and 2 CFD1 chains. Requires [4Fe-4S] cluster as cofactor.

It is found in the cytoplasm. Component of the cytosolic iron-sulfur (Fe/S) protein assembly (CIA) machinery. Required for maturation of extramitochondrial Fe-S proteins. The NBP35-CFD1 heterotetramer forms a Fe-S scaffold complex, mediating the de novo assembly of an Fe-S cluster and its transfer to target apoproteins. The chain is Cytosolic Fe-S cluster assembly factor NBP35 from Chaetomium globosum (strain ATCC 6205 / CBS 148.51 / DSM 1962 / NBRC 6347 / NRRL 1970) (Soil fungus).